Here is a 227-residue protein sequence, read N- to C-terminus: Small ribosomal subunit protein uS3 (227 aa).

Residues 39–109 (IHRFFEKLTR…KIVINVDAVD (71 aa)) form the KH type-2 domain.

The protein belongs to the universal ribosomal protein uS3 family. As to quaternary structure, part of the 30S ribosomal subunit. Forms a tight complex with proteins S10 and S14.

In terms of biological role, binds the lower part of the 30S subunit head. Binds mRNA in the 70S ribosome, positioning it for translation. This is Small ribosomal subunit protein uS3 from Mesomycoplasma hyopneumoniae (strain 232) (Mycoplasma hyopneumoniae).